Reading from the N-terminus, the 251-residue chain is RING-H2 finger protein ATL10 (251 aa).

A helical transmembrane segment spans residues 59–79 (MMLLSILICGIICCLGLHYII). An RING-type; atypical zinc finger spans residues 135–177 (CVICLSDFVSGEQLRLLPKCNHGFHVRCIDKWLQQHLTCPKCR).

The protein belongs to the RING-type zinc finger family. ATL subfamily.

The protein resides in the membrane. The catalysed reaction is S-ubiquitinyl-[E2 ubiquitin-conjugating enzyme]-L-cysteine + [acceptor protein]-L-lysine = [E2 ubiquitin-conjugating enzyme]-L-cysteine + N(6)-ubiquitinyl-[acceptor protein]-L-lysine.. Its pathway is protein modification; protein ubiquitination. The chain is RING-H2 finger protein ATL10 (ATL10) from Arabidopsis thaliana (Mouse-ear cress).